The sequence spans 123 residues: Ribosome-binding factor A (123 aa).

Belongs to the RbfA family. As to quaternary structure, monomer. Binds 30S ribosomal subunits, but not 50S ribosomal subunits or 70S ribosomes.

The protein localises to the cytoplasm. Functionally, one of several proteins that assist in the late maturation steps of the functional core of the 30S ribosomal subunit. Associates with free 30S ribosomal subunits (but not with 30S subunits that are part of 70S ribosomes or polysomes). Required for efficient processing of 16S rRNA. May interact with the 5'-terminal helix region of 16S rRNA. The protein is Ribosome-binding factor A of Legionella pneumophila (strain Paris).